The following is a 385-amino-acid chain: Chaperone protein DnaJ (385 aa).

The J domain maps to 5–70; it reads DFYEVLGVSR…QKKAAYDQYG (66 aa). Residues 137–214 form a CR-type zinc finger; the sequence is GVSKEIEVPT…CHGQGRKQKT (78 aa). Residues C150, C153, C167, C170, C189, C192, C202, and C205 each coordinate Zn(2+). CXXCXGXG motif repeat units follow at residues 150–157, 167–174, 189–196, and 202–209; these read CDTCDGSG, CGTCHGHG, CPTCHGKG, and CNECHGQG.

The protein belongs to the DnaJ family. In terms of assembly, homodimer. Zn(2+) serves as cofactor.

The protein localises to the cytoplasm. In terms of biological role, participates actively in the response to hyperosmotic and heat shock by preventing the aggregation of stress-denatured proteins and by disaggregating proteins, also in an autonomous, DnaK-independent fashion. Unfolded proteins bind initially to DnaJ; upon interaction with the DnaJ-bound protein, DnaK hydrolyzes its bound ATP, resulting in the formation of a stable complex. GrpE releases ADP from DnaK; ATP binding to DnaK triggers the release of the substrate protein, thus completing the reaction cycle. Several rounds of ATP-dependent interactions between DnaJ, DnaK and GrpE are required for fully efficient folding. Also involved, together with DnaK and GrpE, in the DNA replication of plasmids through activation of initiation proteins. The polypeptide is Chaperone protein DnaJ (Vibrio harveyi (Beneckea harveyi)).